The chain runs to 877 residues: DNA repair protein rad16 (877 aa).

At Ser-71 the chain carries Phosphoserine; by CK2. Residues Ser-440–Asp-490 form a disordered region. Over residues Lys-444 to Ala-454 the composition is skewed to basic and acidic residues. Over residues Asn-475–Asp-490 the composition is skewed to polar residues. Residues Arg-652 to Gln-732 form the ERCC4 domain.

Belongs to the XPF family. As to quaternary structure, heterodimer composed of rad16 and swi10.

The protein localises to the nucleus. Its subcellular location is the cytoplasm. The protein resides in the cytoskeleton. It is found in the microtubule organizing center. It localises to the spindle pole body. Its function is as follows. Endonuclease that specifically degrades single-stranded DNA and which is involved in nucleotide excision repair of DNA damaged with UV light, bulky adducts, or cross-linking agents. Required for double strand break-induced interchromosomal gene conversion. This chain is DNA repair protein rad16 (rad16), found in Schizosaccharomyces pombe (strain 972 / ATCC 24843) (Fission yeast).